We begin with the raw amino-acid sequence, 1058 residues long: Carbamoyl phosphate synthase large chain (1058 aa).

A carboxyphosphate synthetic domain region spans residues 1 to 401 (MSKRKDIQKI…SLLKACRSLE (401 aa)). Positions 129, 169, 175, 176, 208, 210, 215, 241, 242, 243, 284, and 298 each coordinate ATP. One can recognise an ATP-grasp 1 domain in the interval 133 to 327 (KQLMQELDQP…IAKLAAKIAV (195 aa)). The Mg(2+) site is built by Q284, E298, and N300. Mn(2+) contacts are provided by Q284, E298, and N300. The interval 402–546 (IGVCHNEMTS…YSTYELENES (145 aa)) is oligomerization domain. The carbamoyl phosphate synthetic domain stretch occupies residues 547–929 (VQSNKESILV…ALYKAFEANN (383 aa)). In terms of domain architecture, ATP-grasp 2 spans 671-861 (EKALKELGIP…MAQIATKLIL (191 aa)). Positions 707, 746, 748, 752, 777, 778, 779, 780, 820, and 832 each coordinate ATP. Residues Q820, E832, and N834 each coordinate Mg(2+). Positions 820, 832, and 834 each coordinate Mn(2+). The MGS-like domain maps to 930 to 1058 (SHLSEFGQIV…ESRCFNIEAI (129 aa)). The tract at residues 930–1058 (SHLSEFGQIV…ESRCFNIEAI (129 aa)) is allosteric domain.

The protein belongs to the CarB family. Composed of two chains; the small (or glutamine) chain promotes the hydrolysis of glutamine to ammonia, which is used by the large (or ammonia) chain to synthesize carbamoyl phosphate. Tetramer of heterodimers (alpha,beta)4. Mg(2+) is required as a cofactor. It depends on Mn(2+) as a cofactor.

The enzyme catalyses hydrogencarbonate + L-glutamine + 2 ATP + H2O = carbamoyl phosphate + L-glutamate + 2 ADP + phosphate + 2 H(+). It carries out the reaction hydrogencarbonate + NH4(+) + 2 ATP = carbamoyl phosphate + 2 ADP + phosphate + 2 H(+). It functions in the pathway amino-acid biosynthesis; L-arginine biosynthesis; carbamoyl phosphate from bicarbonate: step 1/1. Its pathway is pyrimidine metabolism; UMP biosynthesis via de novo pathway; (S)-dihydroorotate from bicarbonate: step 1/3. Large subunit of the glutamine-dependent carbamoyl phosphate synthetase (CPSase). CPSase catalyzes the formation of carbamoyl phosphate from the ammonia moiety of glutamine, carbonate, and phosphate donated by ATP, constituting the first step of 2 biosynthetic pathways, one leading to arginine and/or urea and the other to pyrimidine nucleotides. The large subunit (synthetase) binds the substrates ammonia (free or transferred from glutamine from the small subunit), hydrogencarbonate and ATP and carries out an ATP-coupled ligase reaction, activating hydrogencarbonate by forming carboxy phosphate which reacts with ammonia to form carbamoyl phosphate. This Streptococcus pyogenes serotype M5 (strain Manfredo) protein is Carbamoyl phosphate synthase large chain.